The sequence spans 224 residues: MNEQDKLKKAVGEKAATMVKDGMKVGLGSGSTVYWMIRSLGERIQQDGLKIEGIPSSNQTATWAEEAGIPLTDFSNVKELDITIDGADEVDANNHLIKGGGAALFREKIIAQAAKEFVIIVDQSKVVETLGEFSLPVEVLPFSWQRTANEISKLGCVPTVRVHEEEPLVTDNGNYILDCPFKVIPHPDKLNKEIKSIVGVIETGLFIDMATTVIVGEKDNIYIK.

Substrate-binding positions include 29-32, 85-88, and 98-101; these read SGST, DGAD, and KGGG. Glu-107 serves as the catalytic Proton acceptor. Lys-125 contributes to the substrate binding site.

It belongs to the ribose 5-phosphate isomerase family. As to quaternary structure, homodimer.

It catalyses the reaction aldehydo-D-ribose 5-phosphate = D-ribulose 5-phosphate. The protein operates within carbohydrate degradation; pentose phosphate pathway; D-ribose 5-phosphate from D-ribulose 5-phosphate (non-oxidative stage): step 1/1. Catalyzes the reversible conversion of ribose-5-phosphate to ribulose 5-phosphate. This is Ribose-5-phosphate isomerase A 1 from Oceanobacillus iheyensis (strain DSM 14371 / CIP 107618 / JCM 11309 / KCTC 3954 / HTE831).